The primary structure comprises 315 residues: Acetaldehyde dehydrogenase (315 aa).

Residue serine 13–isoleucine 16 participates in NAD(+) binding. The active-site Acyl-thioester intermediate is cysteine 143. Residues serine 174–asparagine 182 and asparagine 285 each bind NAD(+).

This sequence belongs to the acetaldehyde dehydrogenase family.

It carries out the reaction acetaldehyde + NAD(+) + CoA = acetyl-CoA + NADH + H(+). The protein is Acetaldehyde dehydrogenase of Shewanella woodyi (strain ATCC 51908 / MS32).